A 59-amino-acid chain; its full sequence is Large ribosomal subunit protein uL30 (59 aa).

Belongs to the universal ribosomal protein uL30 family. As to quaternary structure, part of the 50S ribosomal subunit.

The polypeptide is Large ribosomal subunit protein uL30 (Haemophilus influenzae (strain 86-028NP)).